The chain runs to 90 residues: Large ribosomal subunit protein bL27 (90 aa).

The disordered stretch occupies residues 1 to 21 (MAHKKAGGSSRNGRDSHGKRL).

Belongs to the bacterial ribosomal protein bL27 family.

This Nitrobacter winogradskyi (strain ATCC 25391 / DSM 10237 / CIP 104748 / NCIMB 11846 / Nb-255) protein is Large ribosomal subunit protein bL27.